The chain runs to 320 residues: Transcription factor bHLH34 (320 aa).

The 52-residue stretch at Ser-162–Leu-213 folds into the bHLH domain. Positions Trp-299–Ala-320 are disordered. The segment covering Ala-305 to Lys-314 has biased composition (basic and acidic residues).

In terms of assembly, homodimer. As to expression, expressed constitutively in roots, leaves, stems, and flowers.

Its subcellular location is the nucleus. The chain is Transcription factor bHLH34 (BHLH34) from Arabidopsis thaliana (Mouse-ear cress).